The primary structure comprises 464 residues: MTNNVITRFAPSPTGFLHIGSARTALFNYLFAKHNNGKFLLRIEDTDKERSTEAAVEAIFSGLKWLGLNWDDEVVFQSKRNDLYKEAALKLLAEGKAYYCFTPQEEIEKQRQEALENKQHFIFNSKWRDKTSDTYPKDIKPVIRLKTPSSGSITIHDTLQGDVVIENCHIDDMVLLRSDGTATYMLAVVVDDHDMGITHIIRGDDHLTNAARQIAIYNAFGYHVPIMTHIPLIHGADGAKLSKRHGALGVEAYKDMGYLPESLCNYLLRLGWSHGDDEIIQMDQAIEWFNLDSLGKSPARLDFTKMNSLNSHYLRMLDEDSLITKILEILNRNYKVSEQEVNYIRRGLQGLLVRSETLLDLAKLAKIYLVNIPVAYESEAKEIIANCDKNLINNVVQGLEKLERFDKESVQDEFKKIAAANSLKLNEVMKPVRALITGMVGSPSVFEIAEILGKENILKRLEIK.

The 'HIGH' region motif lies at 11–21; it reads PSPTGFLHIGS. The 'KMSKS' region motif lies at 240-244; sequence KLSKR. Lys-243 is a binding site for ATP.

It belongs to the class-I aminoacyl-tRNA synthetase family. Glutamate--tRNA ligase type 1 subfamily. In terms of assembly, monomer.

Its subcellular location is the cytoplasm. It carries out the reaction tRNA(Glu) + L-glutamate + ATP = L-glutamyl-tRNA(Glu) + AMP + diphosphate. In terms of biological role, catalyzes the attachment of glutamate to tRNA(Glu) in a two-step reaction: glutamate is first activated by ATP to form Glu-AMP and then transferred to the acceptor end of tRNA(Glu). The sequence is that of Glutamate--tRNA ligase 2 from Rickettsia bellii (strain OSU 85-389).